A 270-amino-acid chain; its full sequence is Protein-ADP-ribose hydrolase (270 aa).

Residues 73–267 enclose the Macro domain; sequence VSVKDCQKTN…LYDTYLQKEN (195 aa). ADP-D-ribose-binding residues include Asp92, Ile93, and Asn106. Zn(2+)-binding residues include Cys112, His117, and Cys119. Positions 119, 120, 121, 212, 213, 214, 215, and 216 each coordinate ADP-D-ribose.

This sequence belongs to the MacroD-type family. Zn-Macro subfamily. Zn(2+) serves as cofactor.

It catalyses the reaction 4-O-(ADP-D-ribosyl)-L-aspartyl-[protein] + H2O = L-aspartyl-[protein] + ADP-D-ribose + H(+). Its function is as follows. ADP-ribosylhydrolase that specifically reverses the SirTM-mediated mono-ADP-ribosylation at an asparatate residue of GcvH-L, by releasing ADP-ribose from the target protein. May play a role in the regulation of the response to host-induced oxidative stress. The protein is Protein-ADP-ribose hydrolase of Streptococcus pyogenes serotype M1.